The following is a 262-amino-acid chain: MGSRPCSPSACLAPWWGQQPGGPGPAKRSRLEEPAGPESRAAPSPEDPAGTPAVDALTSMVVLDAGCALRVPLEDVDLVLELAPMSVLRVSLGGHTLIVIPEVLLSSVDECSGAQGDWSAGLEVDVFLGAHGEDVVVEQEVCASVPEIAAEEEAYEEDADSEFPELWMDSAAGSAAGLYPSARSMFSPYREGPIRGPCALAPNPSSERRSPRPIFDLEFHLLEPVPSSPLQPLPPSPSPGPHARPELPERPPCKVRRRLFQE.

Disordered stretches follow at residues 1-52 (MGSR…AGTP) and 225-262 (VPSS…LFQE). Residues 226-242 (PSSPLQPLPPSPSPGPH) are compositionally biased toward pro residues. Basic and acidic residues predominate over residues 243-252 (ARPELPERPP). Residues 253–262 (CKVRRRLFQE) are compositionally biased toward basic residues.

The protein belongs to the PRR23 family.

The protein is Proline-rich protein 23C (PRR23C) of Homo sapiens (Human).